We begin with the raw amino-acid sequence, 636 residues long: Methyl-CpG-binding domain protein 1 (636 aa).

One can recognise an MBD domain in the interval 1–69 (MAESWQDCPA…TLFDFRQGTL (69 aa)). Residues 75 to 113 (KTHPLAVPSKKKKKPSKPAKTKKQQVGLQRSEVRIETPQ) form a disordered region. Over residues 83–97 (SKKKKKPSKPAKTKK) the composition is skewed to basic residues. Positions 84-88 (KKKKK) match the Nuclear localization signal motif. A Glycyl lysine isopeptide (Lys-Gly) (interchain with G-Cter in SUMO2) cross-link involves residue K117. 2 consecutive CXXC-type zinc fingers follow at residues 187 to 234 (RMFK…RRCL) and 235 to 281 (RIME…RRCF). 16 residues coordinate Zn(2+): C194, C197, C200, C206, C209, C212, C228, C233, C243, C246, C249, C255, C258, C261, C275, and C280. The interval 291–314 (GSKVASQRHSQAPPLPPHPASQYT) is disordered. A Glycyl lysine isopeptide (Lys-Gly) (interchain with G-Cter in SUMO2) cross-link involves residue K293. The CXXC-type 3 zinc-finger motif lies at 348–396 (TNQRQNRKCGACAACLRRMDCGRCDFCCDKPKFGGGNQKRQKCRWRQCL). Residues C356, C359, C362, C368, C371, C374, C390, and C395 each contribute to the Zn(2+) site. The tract at residues 407–474 (AGSGSGEGAG…GRGSVLPQPD (68 aa)) is disordered. A Phosphoserine modification is found at S409. Glycyl lysine isopeptide (Lys-Gly) (interchain with G-Cter in SUMO2) cross-links involve residues K443 and K461. Residues K520 and K559 each participate in a glycyl lysine isopeptide (Lys-Gly) (interchain with G-Cter in SUMO2); alternate cross-link. Residues 543 to 589 (QSGFPSKAADPDLSPVKQEPPGPEEDGEEKKDDVSETTPAEEIGGVG) are disordered. The transcriptional repression domain (TRD) stretch occupies residues 550-612 (AADPDLSPVK…RLRDAEAWLP (63 aa)).

Interacts with OASL, ATF7IP, ATF7IP2 and BAHD1. Binds CHAF1A and the SUV39H1-CBX5 complex via the MBD domain. Binds MGP via the TRD domain. May be part of the MeCP1 complex. During DNA replication, it recruits SETDB1 to form a S phase-specific complex that facilitates methylation of H3 'Lys-9' during replication-coupled chromatin assembly and is at least composed of the CAF-1 subunit CHAF1A, MBD1 and SETDB1. As to quaternary structure, interacts with the Ten-1 ICD form of TENM1. Sumoylated, sumoylation may increase interaction with ATF7IP. Highly expressed in kidney, liver and brain. Detected at lower levels in heart, lung, skeletal muscle, spleen and testis.

It is found in the nucleus. It localises to the nucleus matrix. The protein resides in the nucleus speckle. Its subcellular location is the chromosome. Its function is as follows. Transcriptional repressor that binds CpG islands in promoters where the DNA is methylated at position 5 of cytosine within CpG dinucleotides. Binding is abolished by the presence of 7-mG that is produced by DNA damage by methylmethanesulfonate (MMS). Acts as transcriptional repressor and plays a role in gene silencing by recruiting ATF7IP, which in turn recruits factors such as the histone methyltransferase SETDB1. Probably forms a complex with SETDB1 and ATF7IP that represses transcription and couples DNA methylation and histone 'Lys-9' trimethylation. Isoform 1 can also repress transcription from unmethylated promoters. In Mus musculus (Mouse), this protein is Methyl-CpG-binding domain protein 1.